A 251-amino-acid chain; its full sequence is Triosephosphate isomerase (251 aa).

A substrate-binding site is contributed by 9–11 (NWK). Catalysis depends on H96, which acts as the Electrophile. E168 (proton acceptor) is an active-site residue. Substrate-binding positions include G174, S214, and 235-236 (GG).

The protein belongs to the triosephosphate isomerase family. As to quaternary structure, homodimer.

The protein resides in the cytoplasm. It catalyses the reaction D-glyceraldehyde 3-phosphate = dihydroxyacetone phosphate. It participates in carbohydrate biosynthesis; gluconeogenesis. It functions in the pathway carbohydrate degradation; glycolysis; D-glyceraldehyde 3-phosphate from glycerone phosphate: step 1/1. Involved in the gluconeogenesis. Catalyzes stereospecifically the conversion of dihydroxyacetone phosphate (DHAP) to D-glyceraldehyde-3-phosphate (G3P). The polypeptide is Triosephosphate isomerase (Porphyromonas gingivalis (strain ATCC 33277 / DSM 20709 / CIP 103683 / JCM 12257 / NCTC 11834 / 2561)).